Here is a 171-residue protein sequence, read N- to C-terminus: S-ribosylhomocysteine lyase (171 aa).

Positions 54, 58, and 128 each coordinate Fe cation.

The protein belongs to the LuxS family. As to quaternary structure, homodimer. Fe cation is required as a cofactor.

The enzyme catalyses S-(5-deoxy-D-ribos-5-yl)-L-homocysteine = (S)-4,5-dihydroxypentane-2,3-dione + L-homocysteine. Involved in the synthesis of autoinducer 2 (AI-2) which is secreted by bacteria and is used to communicate both the cell density and the metabolic potential of the environment. The regulation of gene expression in response to changes in cell density is called quorum sensing. Catalyzes the transformation of S-ribosylhomocysteine (RHC) to homocysteine (HC) and 4,5-dihydroxy-2,3-pentadione (DPD). The protein is S-ribosylhomocysteine lyase of Aliarcobacter butzleri (strain RM4018) (Arcobacter butzleri).